A 356-amino-acid polypeptide reads, in one-letter code: MRKIIHIDMDCYYAAVEMRDNPQYRDIPLAIGGSADRRGVISTCNYVARKYGVRSAMATAYARKLCPDLVLVPGRMALYSEISQQIRKIFLRYTDKIEPLSLDEAYLDVTDSELFSGSATLIAQDIRRAIFEETQLTASAGVAPCKFVAKIASDENKPNGICVITPDTQDAFVKTLALGKIPGVGKVTLQKLNNMGLFTCQDVRDYPLDAFVKAFGKFGPVIWDRSHGIDERELSVSRKRKSVGVERTLAQDITTDEECLAMLESLYPKLLSRLEAASPKLAIQSQGVKLKFNDFQQTTVEHRHQVLDKTYFKTLLSEALERRGTRGIRLVGLSVGLPETADVQQMVFNFEHEQNR.

The UmuC domain occupies 4-185; sequence IIHIDMDCYY…LALGKIPGVG (182 aa). Residues Asp-8 and Asp-103 each coordinate Mg(2+). The active site involves Glu-104.

Belongs to the DNA polymerase type-Y family. As to quaternary structure, monomer. Requires Mg(2+) as cofactor.

The protein localises to the cytoplasm. The enzyme catalyses DNA(n) + a 2'-deoxyribonucleoside 5'-triphosphate = DNA(n+1) + diphosphate. In terms of biological role, poorly processive, error-prone DNA polymerase involved in untargeted mutagenesis. Copies undamaged DNA at stalled replication forks, which arise in vivo from mismatched or misaligned primer ends. These misaligned primers can be extended by PolIV. Exhibits no 3'-5' exonuclease (proofreading) activity. May be involved in translesional synthesis, in conjunction with the beta clamp from PolIII. This Pseudoalteromonas atlantica (strain T6c / ATCC BAA-1087) protein is DNA polymerase IV.